The sequence spans 183 residues: MASRAGPRAAGTDGSDFQHRERVAMHYQMSVTLKYEIKKLIYVHLVIWLLLVAKMSVGHLRLLSHDQVAMPYQWEYPYLLSIVPSVLGLLSFPRNNISYLVLSMISMGLFSIAPLIYGSMEMFPAAQQLYRHGKAYRFLFGFSAVSVMYLVLVLAVQVHAWQLYYSKKLLDSWFTSTQEKKRK.

Over 1-39 the chain is Cytoplasmic; it reads MASRAGPRAAGTDGSDFQHRERVAMHYQMSVTLKYEIKK. Serine 3 carries the phosphoserine modification. Residues 40–60 form a helical membrane-spanning segment; it reads LIYVHLVIWLLLVAKMSVGHL. Residues 61 to 71 lie on the Lumenal side of the membrane; that stretch reads RLLSHDQVAMP. The helical transmembrane segment at 72 to 92 threads the bilayer; it reads YQWEYPYLLSIVPSVLGLLSF. At 93–96 the chain is on the cytoplasmic side; that stretch reads PRNN. Residues 97-117 form a helical membrane-spanning segment; it reads ISYLVLSMISMGLFSIAPLIY. Topologically, residues 118–137 are lumenal; it reads GSMEMFPAAQQLYRHGKAYR. The helical transmembrane segment at 138–158 threads the bilayer; that stretch reads FLFGFSAVSVMYLVLVLAVQV. The Cytoplasmic portion of the chain corresponds to 159 to 183; the sequence is HAWQLYYSKKLLDSWFTSTQEKKRK.

It belongs to the jagunal family. In terms of assembly, interacts with COPA, COPB2 and COPG2.

It localises to the endoplasmic reticulum membrane. Its function is as follows. Endoplasmic reticulum transmembrane protein involved in vesicle-mediated transport, which is required for neutrophil function. Required for vesicle-mediated transport; it is however unclear whether it is involved in early secretory pathway or intracellular protein transport. Acts as a regulator of neutrophil function, probably via its role in vesicle-mediated transport: required for defense against fungal pathogens and for granulocyte colony-stimulating factor (GM-CSF) signaling pathway; possibly by regulating glycosylation and/or targeting of proteins contributing to the viability and migration of neutrophils. In Mus musculus (Mouse), this protein is Protein jagunal homolog 1.